Reading from the N-terminus, the 360-residue chain is Peptide chain release factor 1 (360 aa).

Gln-235 carries the N5-methylglutamine modification. Residues 284–312 (AKRQQAEASTRRNLLGSGDRSDRNRTYNF) are disordered.

This sequence belongs to the prokaryotic/mitochondrial release factor family. In terms of processing, methylated by PrmC. Methylation increases the termination efficiency of RF1.

Its subcellular location is the cytoplasm. Functionally, peptide chain release factor 1 directs the termination of translation in response to the peptide chain termination codons UAG and UAA. This Escherichia coli O81 (strain ED1a) protein is Peptide chain release factor 1.